The following is a 120-amino-acid chain: Large ribosomal subunit protein bL21 (120 aa).

It belongs to the bacterial ribosomal protein bL21 family. Part of the 50S ribosomal subunit. Contacts protein L20.

Functionally, this protein binds to 23S rRNA in the presence of protein L20. The protein is Large ribosomal subunit protein bL21 of Rhizorhabdus wittichii (strain DSM 6014 / CCUG 31198 / JCM 15750 / NBRC 105917 / EY 4224 / RW1) (Sphingomonas wittichii).